The following is a 24-amino-acid chain: Humanin-like 3 (24 aa).

It belongs to the humanin family. In terms of tissue distribution, highly expressed in testis. Also expressed in kidney, heart, skeletal muscles and brain.

It localises to the secreted. Its subcellular location is the cytoplasm. Functionally, plays a role as a neuroprotective and antiapoptotic factor. The protein is Humanin-like 3 of Homo sapiens (Human).